Here is a 492-residue protein sequence, read N- to C-terminus: KAT8 regulatory NSL complex subunit 2 (492 aa).

Lys78 is covalently cross-linked (Glycyl lysine isopeptide (Lys-Gly) (interchain with G-Cter in SUMO2)). The tract at residues Leu127–Lys182 is disordered. Position 131 is a phosphothreonine (Thr131). Residues Ser135–Asp144 show a composition bias toward basic and acidic residues. A phosphoserine mark is found at Ser147, Ser149, Ser168, Ser172, and Ser175. The span at Asp167–Glu178 shows a compositional bias: acidic residues. Positions Asp308–Phe364 are required for interaction with other NSL complex members. The disordered stretch occupies residues Ala455–Ser492.

Component of the NSL complex at least composed of KAT8/MOF, KANSL1, KANSL2, KANSL3, MCRS1, PHF20, OGT1/OGT, WDR5 and HCFC1.

It is found in the nucleus. The protein resides in the mitochondrion. In terms of biological role, non-catalytic component of the NSL histone acetyltransferase complex, a multiprotein complex that mediates histone H4 acetylation at 'Lys-5'- and 'Lys-8' (H4K5ac and H4K8ac) at transcription start sites and promotes transcription initiation. Required for NSL complex stability and for transcription of intraciliary transport genes in both ciliated and non-ciliated cells by regulating histone H4 acetylation at 'Lys-5'- and 'Lys-12' (H4K5ac and H4K12ac). This is necessary for cilium assembly in ciliated cells and for organization of the microtubule cytoskeleton in non-ciliated cells. Required within the NSL complex to maintain nuclear architecture stability by promoting KAT8-mediated acetylation of lamin LMNA. In Pongo abelii (Sumatran orangutan), this protein is KAT8 regulatory NSL complex subunit 2 (KANSL2).